The chain runs to 245 residues: 3-deoxy-manno-octulosonate cytidylyltransferase (245 aa).

The protein belongs to the KdsB family.

The protein localises to the cytoplasm. The enzyme catalyses 3-deoxy-alpha-D-manno-oct-2-ulosonate + CTP = CMP-3-deoxy-beta-D-manno-octulosonate + diphosphate. The protein operates within nucleotide-sugar biosynthesis; CMP-3-deoxy-D-manno-octulosonate biosynthesis; CMP-3-deoxy-D-manno-octulosonate from 3-deoxy-D-manno-octulosonate and CTP: step 1/1. It participates in bacterial outer membrane biogenesis; lipopolysaccharide biosynthesis. Activates KDO (a required 8-carbon sugar) for incorporation into bacterial lipopolysaccharide in Gram-negative bacteria. In Rhodopseudomonas palustris (strain HaA2), this protein is 3-deoxy-manno-octulosonate cytidylyltransferase.